The following is a 146-amino-acid chain: Small ribosomal subunit protein uS5 (146 aa).

Positions phenylalanine 8 to valine 71 constitute an S5 DRBM domain.

The protein belongs to the universal ribosomal protein uS5 family. In terms of assembly, part of the 30S ribosomal subunit. Contacts proteins S4 and S8.

In terms of biological role, with S4 and S12 plays an important role in translational accuracy. Functionally, located at the back of the 30S subunit body where it stabilizes the conformation of the head with respect to the body. The polypeptide is Small ribosomal subunit protein uS5 (Campylobacter hominis (strain ATCC BAA-381 / DSM 21671 / CCUG 45161 / LMG 19568 / NCTC 13146 / CH001A)).